Here is a 359-residue protein sequence, read N- to C-terminus: Acetoin catabolism protein X (359 aa).

It is found in the cell membrane. The protein operates within ketone degradation; acetoin degradation. Functionally, essential for acetoin catabolism. In Cupriavidus necator (strain ATCC 17699 / DSM 428 / KCTC 22496 / NCIMB 10442 / H16 / Stanier 337) (Ralstonia eutropha), this protein is Acetoin catabolism protein X (acoX).